We begin with the raw amino-acid sequence, 341 residues long: 4-hydroxy-2-oxovalerate aldolase 2 (341 aa).

Residues 8–260 (VTVHDMTLRD…ETGVDVAKIT (253 aa)) form the Pyruvate carboxyltransferase domain. A substrate-binding site is contributed by 16-17 (RD). A Mn(2+)-binding site is contributed by Asp17. His20 acts as the Proton acceptor in catalysis. The substrate site is built by Ser170 and His199. Residues His199 and His201 each coordinate Mn(2+). Tyr290 is a binding site for substrate.

Belongs to the 4-hydroxy-2-oxovalerate aldolase family.

It catalyses the reaction (S)-4-hydroxy-2-oxopentanoate = acetaldehyde + pyruvate. The chain is 4-hydroxy-2-oxovalerate aldolase 2 from Dechloromonas aromatica (strain RCB).